We begin with the raw amino-acid sequence, 90 residues long: Small ribosomal subunit protein uS15c (90 aa).

Belongs to the universal ribosomal protein uS15 family. Part of the 30S ribosomal subunit.

It is found in the plastid. It localises to the chloroplast. In Pelargonium hortorum (Common geranium), this protein is Small ribosomal subunit protein uS15c (rps15-A).